A 128-amino-acid polypeptide reads, in one-letter code: Large ribosomal subunit protein bL17 (128 aa).

This sequence belongs to the bacterial ribosomal protein bL17 family. As to quaternary structure, part of the 50S ribosomal subunit. Contacts protein L32.

This chain is Large ribosomal subunit protein bL17, found in Edwardsiella ictaluri (strain 93-146).